Here is a 602-residue protein sequence, read N- to C-terminus: Carbon catabolite repressor protein 4 homolog 1 (602 aa).

A disordered region spans residues 113–136; sequence ASAATEGNDEEELPRLNSSGSGSG. E299 contacts Mg(2+).

Belongs to the CCR4/nocturin family. As to quaternary structure, component of the CCR4-NOT complex, at least composed of CRR4 and CAF1 proteins. Requires Mg(2+) as cofactor.

The protein resides in the nucleus. Its subcellular location is the cytoplasm. It catalyses the reaction Exonucleolytic cleavage of poly(A) to 5'-AMP.. Functionally, acts as a catalytic component of the CCR4-NOT core complex, which in the nucleus seems to be a general transcription factor, and in the cytoplasm the major mRNA deadenylase involved in mRNA turnover. In Arabidopsis thaliana (Mouse-ear cress), this protein is Carbon catabolite repressor protein 4 homolog 1 (CCR4-1).